The chain runs to 239 residues: Serine protease SplC (239 aa).

The signal sequence occupies residues methionine 1–alanine 36. Active-site charge relay system residues include histidine 75, aspartate 113, and serine 193.

Belongs to the peptidase S1B family.

Its subcellular location is the secreted. The polypeptide is Serine protease SplC (splC) (Staphylococcus aureus (strain USA300 / TCH1516)).